Here is a 287-residue protein sequence, read N- to C-terminus: MGETLKVIVLIDRILKSYRPLIAIPAAITVIALLLVVFNGLNESVDLKGGALAELTLEKSVTQAELESLLREKLGTGDIKVLSIRGERVTVQFGTDMDVVKVSEALRGTATINSYKAVGPVLSKQAMNQIYWAIGFAFLFMSVTVFIIFRDPVPSLAVILAAASDIIIAVGGMSLFGIPLSLASVGAILMLIGYSVDTDILLTTRVLKRRKGTINERALGAMKTGVTMSIAAIASMAALYLVTVFVMPEARVLSDIAAVLIIGLLADILTTWLMNLGILRWYLEVRS.

The next 6 helical transmembrane spans lie at 21-41 (LIAI…FNGL), 129-149 (QIYW…FIIF), 158-178 (VILA…LFGI), 182-202 (LASV…DILL), 226-246 (VTMS…TVFV), and 259-279 (VLII…LGIL).

The protein belongs to the SecD/SecF family. SecF subfamily. Part of the protein translocation apparatus. Forms a complex with SecD.

The protein resides in the cell membrane. Functionally, involved in protein export. This is Protein-export membrane protein SecF from Methanothermobacter thermautotrophicus (strain ATCC 29096 / DSM 1053 / JCM 10044 / NBRC 100330 / Delta H) (Methanobacterium thermoautotrophicum).